The chain runs to 501 residues: Solute carrier family 2, facilitated glucose transporter member 5 (501 aa).

Position 1 is an N-acetylmethionine (Met1). At 1-18 (MEQQDPIKKEGRLTPVLA) the chain is on the cytoplasmic side. Residues 19–39 (LATLIAAFGSSFQYGYNVAAV) traverse the membrane as a helical segment. Residue Tyr32 participates in D-fructose binding. Residues 40–68 (NSPAELMKAFYNETHYSRFSEYISEFSLT) are Extracellular-facing. N-linked (GlcNAc...) asparagine glycosylation occurs at Asn51. A helical membrane pass occupies residues 69–91 (LLWSISVSMFPFGGFVGSLMVGP). The Cytoplasmic segment spans residues 92–98 (LVNRLGR). Residues 99 to 119 (KGTLLFNNIFSIVPAILMGTS) form a helical membrane-spanning segment. Over 120–126 (KTARSYE) the chain is Extracellular. The helical transmembrane segment at 127–149 (MIILSRLLVGICAGLSSNVVPMY) threads the bilayer. Topologically, residues 150–161 (LGELSPKNLRGA) are cytoplasmic. Residues 162-182 (LGVVPQLFITVGILVAQIVGL) form a helical membrane-spanning segment. Gln167 provides a ligand contact to D-fructose. Topologically, residues 183–192 (RSLLATEEGW) are extracellular. Residues 193–213 (PILLGLTAIPAALQLLLLPFF) form a helical membrane-spanning segment. Topologically, residues 214-277 (PESPRYLLIQ…MFRMRSLRWQ (64 aa)) are cytoplasmic. A helical transmembrane segment spans residues 278–298 (VISIIILMGGQQLSGVNAIYY). D-fructose-binding positions include Gln288 and 296–298 (IYY). The Extracellular segment spans residues 299-313 (YADQIYLSAGVKDQD). Residues 314-334 (VQYVTVGTGAVNVLMTICAVF) form a helical membrane-spanning segment. Residues 335–342 (VVEYLGRR) are Cytoplasmic-facing. A helical membrane pass occupies residues 343–363 (ALLLLGFSVCFIACCVLTVAL). Over 364–371 (ALQDRVSW) the chain is Extracellular. Residues 372–394 (MPYISIVCVISYVIGHALGPSPI) form a helical membrane-spanning segment. His387 serves as a coordination point for D-fructose. Over 395-412 (PALLITEVFLQSSRSAAY) the chain is Cytoplasmic. Residues 413–433 (MVGGTVHWLSNFAVGLVFPFI) form a helical membrane-spanning segment. 419 to 420 (HW) is a D-fructose binding site. Over 434-439 (QVGLGA) the chain is Extracellular. Residues 440-460 (YSFIIFAVICLLTTIYIFLIV) traverse the membrane as a helical segment. The Cytoplasmic portion of the chain corresponds to 461–501 (PETKGKTFVEINHIFTKMNKVSDVHPAKDELKDIPLSAVEL).

It belongs to the major facilitator superfamily. Sugar transporter (TC 2.A.1.1) family. Glucose transporter subfamily.

It localises to the apical cell membrane. Its subcellular location is the cell membrane. The protein localises to the sarcolemma. It carries out the reaction D-fructose(out) = D-fructose(in). Functions as a fructose transporter that has only low activity with other monosaccharides. Can mediate the uptake of deoxyglucose, but with low efficiency. Essential for fructose uptake in the small intestine. Plays a role in the regulation of salt uptake and blood pressure in response to dietary fructose. Required for the development of high blood pressure in response to high dietary fructose intake. This chain is Solute carrier family 2, facilitated glucose transporter member 5, found in Equus caballus (Horse).